Reading from the N-terminus, the 862-residue chain is Eukaryotic translation initiation factor 3 subunit C (862 aa).

The disordered stretch occupies residues 1–81 (MSSRFFYGGG…EEEEKVTVVK (81 aa)). Acidic residues predominate over residues 17–54 (SSDEEELYSDREEEEKSEEEESSEEEDETSEEEESDEE). Positions 55 to 65 (TGAKKFLKDVA) are enriched in basic and acidic residues. Acidic residues predominate over residues 66–75 (SDSEEEEEEE). Residues 600–774 (FHMHINLELL…NAIVFRKGVE (175 aa)) enclose the PCI domain. The interval 813-862 (RDQGAGARGGRGSGRGGQARGGPRFPGGQQGRRPGGQQFGGGALGGAIKA) is disordered. Residues 818–862 (GARGGRGSGRGGQARGGPRFPGGQQGRRPGGQQFGGGALGGAIKA) show a composition bias toward gly residues.

This sequence belongs to the eIF-3 subunit C family. Component of the eukaryotic translation initiation factor 3 (eIF-3) complex.

It is found in the cytoplasm. Its function is as follows. Component of the eukaryotic translation initiation factor 3 (eIF-3) complex, which is involved in protein synthesis of a specialized repertoire of mRNAs and, together with other initiation factors, stimulates binding of mRNA and methionyl-tRNAi to the 40S ribosome. The eIF-3 complex specifically targets and initiates translation of a subset of mRNAs involved in cell proliferation. The sequence is that of Eukaryotic translation initiation factor 3 subunit C (nip1) from Neosartorya fischeri (strain ATCC 1020 / DSM 3700 / CBS 544.65 / FGSC A1164 / JCM 1740 / NRRL 181 / WB 181) (Aspergillus fischerianus).